A 144-amino-acid chain; its full sequence is Large ribosomal subunit protein uL16 (144 aa).

The span at 1–16 (MLIPKRVKYRKQHRPR) shows a compositional bias: basic residues. Residues 1 to 25 (MLIPKRVKYRKQHRPRGNGGVSKGG) form a disordered region.

The protein belongs to the universal ribosomal protein uL16 family. In terms of assembly, part of the 50S ribosomal subunit.

Binds 23S rRNA and is also seen to make contacts with the A and possibly P site tRNAs. The protein is Large ribosomal subunit protein uL16 of Desulforamulus reducens (strain ATCC BAA-1160 / DSM 100696 / MI-1) (Desulfotomaculum reducens).